Consider the following 406-residue polypeptide: LIM/homeobox protein Lhx1 (406 aa).

2 LIM zinc-binding domains span residues 4–54 (CAGC…CKND) and 63–117 (CAGC…CKED). Disordered regions lie at residues 128–187 (NSLH…RTTI) and 293–374 (YDFF…EVFG). A compositionally biased stretch (low complexity) spans 137-148 (SDPSLSPDSQDP). A compositionally biased stretch (basic and acidic residues) spans 151-167 (DDAKDSESANVSDKEAG). Residue S162 is modified to Phosphoserine. Residues 180–239 (RRGPRTTIKAKQLETLKAAFAATPKPTRHIREQLAQETGLNMRVIQVWFQNRRSKERRMK) constitute a DNA-binding region (homeobox). The segment covering 315–327 (PSSGPSGTPLGGL) has biased composition (low complexity). A compositionally biased stretch (pro residues) spans 352–362 (GDSPSPEPSLP).

In terms of assembly, interacts with LDB1 via the tandem LIM domains. In terms of tissue distribution, expressed in the brain, thymus, and tonsils. Expressed in samples from patients with chronic myeloid leukemia (CML) and in 58% of acute myeloid leukemia (AML) cell lines.

It is found in the nucleus. In terms of biological role, potential transcription factor. May play a role in early mesoderm formation and later in lateral mesoderm differentiation and neurogenesis. The chain is LIM/homeobox protein Lhx1 (LHX1) from Homo sapiens (Human).